Reading from the N-terminus, the 156-residue chain is Small ribosomal subunit protein uS7 (156 aa).

It belongs to the universal ribosomal protein uS7 family. As to quaternary structure, part of the 30S ribosomal subunit. Contacts proteins S9 and S11.

Functionally, one of the primary rRNA binding proteins, it binds directly to 16S rRNA where it nucleates assembly of the head domain of the 30S subunit. Is located at the subunit interface close to the decoding center, probably blocks exit of the E-site tRNA. The chain is Small ribosomal subunit protein uS7 from Nitrobacter winogradskyi (strain ATCC 25391 / DSM 10237 / CIP 104748 / NCIMB 11846 / Nb-255).